A 326-amino-acid chain; its full sequence is MKKTLVALAILTAAGSANAGINLYDADGVKTDLSGAAEVQYRQTFKEDSDAELRMDDGDLAVNTTVAISDSLNAVAAVAFEFEDGKVTNDELWVGVAGDFGTLTAGRQYMLADDAGVGKDYELGGDGIDFVQANGDQVVKYVFDNGQFYGGVGALITETNPDNNADEASVYEGRLGARFGDFDVRAYLYSGEDVNTDNFDVFGDDKVNVDIDGYQIEAEYIVNAFAFAASFGQVDYELASDSSQKIEADTAALAGSYTMNKTTFAVGYTYWSPEAKGTVKKMEEANVFYANVTQQLHSNVKVYGEIGSSDTDNSEFGYVAGMEVTF.

A signal peptide spans 1 to 19; sequence MKKTLVALAILTAAGSANA.

It belongs to the Gram-negative porin family. Oligomer.

The protein resides in the cell outer membrane. Functionally, forms pores that allow passive diffusion of small molecules across the outer membrane. This Photobacterium profundum (strain SS9) protein is Porin-like protein H (ompH).